The chain runs to 172 residues: Ribosome maturation factor RimM (172 aa).

A PRC barrel domain is found at 99 to 171 (DDIPTWNYFI…LLTVEVPDGL (73 aa)).

Belongs to the RimM family. As to quaternary structure, binds ribosomal protein uS19.

The protein localises to the cytoplasm. Functionally, an accessory protein needed during the final step in the assembly of 30S ribosomal subunit, possibly for assembly of the head region. Essential for efficient processing of 16S rRNA. May be needed both before and after RbfA during the maturation of 16S rRNA. It has affinity for free ribosomal 30S subunits but not for 70S ribosomes. This is Ribosome maturation factor RimM from Phocaeicola vulgatus (strain ATCC 8482 / DSM 1447 / JCM 5826 / CCUG 4940 / NBRC 14291 / NCTC 11154) (Bacteroides vulgatus).